Reading from the N-terminus, the 204-residue chain is Large ribosomal subunit protein eL15 (204 aa).

The protein belongs to the eukaryotic ribosomal protein eL15 family. In terms of assembly, component of the large ribosomal subunit.

The protein localises to the cytoplasm. In terms of biological role, component of the large ribosomal subunit. The ribosome is a large ribonucleoprotein complex responsible for the synthesis of proteins in the cell. This chain is Large ribosomal subunit protein eL15 (rpl15), found in Siniperca knerii (Big-eye mandarin fish).